The primary structure comprises 236 residues: Demethylmenaquinone methyltransferase (236 aa).

S-adenosyl-L-methionine-binding positions include Thr58, Asp79, and 106–107 (NA).

It belongs to the class I-like SAM-binding methyltransferase superfamily. MenG/UbiE family.

The catalysed reaction is a 2-demethylmenaquinol + S-adenosyl-L-methionine = a menaquinol + S-adenosyl-L-homocysteine + H(+). Its pathway is quinol/quinone metabolism; menaquinone biosynthesis; menaquinol from 1,4-dihydroxy-2-naphthoate: step 2/2. Functionally, methyltransferase required for the conversion of demethylmenaquinol (DMKH2) to menaquinol (MKH2). The chain is Demethylmenaquinone methyltransferase from Listeria welshimeri serovar 6b (strain ATCC 35897 / DSM 20650 / CCUG 15529 / CIP 8149 / NCTC 11857 / SLCC 5334 / V8).